The sequence spans 141 residues: Putative pre-16S rRNA nuclease (141 aa).

The protein belongs to the YqgF nuclease family.

The protein localises to the cytoplasm. Its function is as follows. Could be a nuclease involved in processing of the 5'-end of pre-16S rRNA. This is Putative pre-16S rRNA nuclease from Shewanella denitrificans (strain OS217 / ATCC BAA-1090 / DSM 15013).